A 692-amino-acid polypeptide reads, in one-letter code: Elongation factor G (692 aa).

One can recognise a tr-type G domain in the interval 8 to 283 (NRIRNIGIAA…AVIDYLPAPT (276 aa)). Residues 17 to 24 (AHIDAGKT), 81 to 85 (DTPGH), and 135 to 138 (NKMD) each bind GTP.

This sequence belongs to the TRAFAC class translation factor GTPase superfamily. Classic translation factor GTPase family. EF-G/EF-2 subfamily.

It is found in the cytoplasm. Its function is as follows. Catalyzes the GTP-dependent ribosomal translocation step during translation elongation. During this step, the ribosome changes from the pre-translocational (PRE) to the post-translocational (POST) state as the newly formed A-site-bound peptidyl-tRNA and P-site-bound deacylated tRNA move to the P and E sites, respectively. Catalyzes the coordinated movement of the two tRNA molecules, the mRNA and conformational changes in the ribosome. In Helicobacter pylori (strain Shi470), this protein is Elongation factor G.